The primary structure comprises 351 residues: Autoinducer 2 import system permease protein LsrC (351 aa).

9 helical membrane passes run 14–34, 39–59, 70–90, 93–113, 115–135, 155–175, 213–233, 252–272, and 284–304; these read LLAI…YFSL, MIFS…LVML, ITGL…GLAA, LFAL…VTWL, IPAI…MLLL, ILFS…AMAW, MNGV…GFIP, GISL…AFLL, and LPAW…LVFD.

The protein belongs to the binding-protein-dependent transport system permease family. AraH/RbsC subfamily. The complex is composed of two ATP-binding proteins (LsrA), two transmembrane proteins (LsrC and LsrD) and a solute-binding protein (LsrB).

It localises to the cell inner membrane. In terms of biological role, part of the ABC transporter complex LsrABCD involved in autoinducer 2 (AI-2) import. Probably responsible for the translocation of the substrate across the membrane. The polypeptide is Autoinducer 2 import system permease protein LsrC (lsrC) (Yersinia pestis bv. Antiqua (strain Antiqua)).